The chain runs to 140 residues: Small ribosomal subunit protein eS12 (140 aa).

This sequence belongs to the eukaryotic ribosomal protein eS12 family. Part of the small subunit (SSU) processome, composed of more than 70 proteins and the RNA chaperone small nucleolar RNA (snoRNA) U3. Subunit of the 40S ribosomal complex.

It localises to the nucleus. The protein localises to the nucleolus. Its function is as follows. Part of the small subunit (SSU) processome, first precursor of the small eukaryotic ribosomal subunit. During the assembly of the SSU processome in the nucleolus, many ribosome biogenesis factors, an RNA chaperone and ribosomal proteins associate with the nascent pre-rRNA and work in concert to generate RNA folding, modifications, rearrangements and cleavage as well as targeted degradation of pre-ribosomal RNA by the RNA exosome. Subunit of the 40S ribosomal complex. Involved in cold-warm shock-induced translocation of the RNA exosome components from the nucleolus to nucleoplasm. This is Small ribosomal subunit protein eS12 (rps-12) from Caenorhabditis elegans.